The chain runs to 106 residues: Thioredoxin (106 aa).

One can recognise a Thioredoxin domain in the interval Ser-2–Gly-106. A disulfide bridge connects residues Cys-30 and Cys-33.

Belongs to the thioredoxin family.

In terms of biological role, participates in various redox reactions through the reversible oxidation of its active center dithiol to a disulfide and catalyzes dithiol-disulfide exchange reactions. This Helicobacter pylori (strain J99 / ATCC 700824) (Campylobacter pylori J99) protein is Thioredoxin (trxA).